A 113-amino-acid chain; its full sequence is Large ribosomal subunit protein uL22 (113 aa).

This sequence belongs to the universal ribosomal protein uL22 family. As to quaternary structure, part of the 50S ribosomal subunit.

Its function is as follows. This protein binds specifically to 23S rRNA; its binding is stimulated by other ribosomal proteins, e.g. L4, L17, and L20. It is important during the early stages of 50S assembly. It makes multiple contacts with different domains of the 23S rRNA in the assembled 50S subunit and ribosome. In terms of biological role, the globular domain of the protein is located near the polypeptide exit tunnel on the outside of the subunit, while an extended beta-hairpin is found that lines the wall of the exit tunnel in the center of the 70S ribosome. This is Large ribosomal subunit protein uL22 from Syntrophomonas wolfei subsp. wolfei (strain DSM 2245B / Goettingen).